The following is a 115-amino-acid chain: Peptidyl-tRNA hydrolase (115 aa).

The protein belongs to the PTH2 family.

It localises to the cytoplasm. It catalyses the reaction an N-acyl-L-alpha-aminoacyl-tRNA + H2O = an N-acyl-L-amino acid + a tRNA + H(+). In terms of biological role, the natural substrate for this enzyme may be peptidyl-tRNAs which drop off the ribosome during protein synthesis. The chain is Peptidyl-tRNA hydrolase from Methanosarcina acetivorans (strain ATCC 35395 / DSM 2834 / JCM 12185 / C2A).